We begin with the raw amino-acid sequence, 151 residues long: uncharacterized protein (151 aa).

Residues 1 to 151 (MAELASIIRP…SSKTTTLKAR (151 aa)) are disordered. The span at 33-45 (STGLSDLLMLLQS) shows a compositional bias: low complexity. The segment covering 53–64 (RARRRTVCRPRR) has biased composition (basic residues). Residues 108–123 (SSSSNTSSGTATSGES) are compositionally biased toward low complexity. Positions 126 to 141 (ADWRDSSSASDDDRIP) are enriched in basic and acidic residues.

This is an uncharacterized protein from Aotus trivirgatus (Three-striped night monkey).